Consider the following 251-residue polypeptide: Small ribosomal subunit protein uS3 (251 aa).

The 71-residue stretch at 39 to 109 (IRNYVLARLK…EVKIDVVEVI (71 aa)) folds into the KH type-2 domain. Positions 221–239 (EMKRMKDRRADSKSRPRDP) are enriched in basic and acidic residues. A disordered region spans residues 221 to 251 (EMKRMKDRRADSKSRPRDPRSKRRRSRTKRA). The span at 240–251 (RSKRRRSRTKRA) shows a compositional bias: basic residues.

It belongs to the universal ribosomal protein uS3 family. As to quaternary structure, part of the 30S ribosomal subunit. Forms a tight complex with proteins S10 and S14.

In terms of biological role, binds the lower part of the 30S subunit head. Binds mRNA in the 70S ribosome, positioning it for translation. This Chlorobium limicola (strain DSM 245 / NBRC 103803 / 6330) protein is Small ribosomal subunit protein uS3.